Consider the following 264-residue polypeptide: Glutamate racemase (264 aa).

Residues 10–11 (DS) and 42–43 (YG) contribute to the substrate site. Residue Cys-73 is the Proton donor/acceptor of the active site. A substrate-binding site is contributed by 74–75 (NT). The Proton donor/acceptor role is filled by Cys-183. 184–185 (TH) is a substrate binding site.

This sequence belongs to the aspartate/glutamate racemases family.

The catalysed reaction is L-glutamate = D-glutamate. It functions in the pathway cell wall biogenesis; peptidoglycan biosynthesis. Functionally, provides the (R)-glutamate required for cell wall biosynthesis. This chain is Glutamate racemase, found in Streptococcus pyogenes serotype M4 (strain MGAS10750).